An 856-amino-acid chain; its full sequence is Inactive rhomboid protein 1 (856 aa).

Residues 1-21 are disordered; it reads MGEARRDSSSSLQHKKPPWLK. The Cytoplasmic segment spans residues 1–412; that stretch reads MGEARRDSSS…HRPFFTYWLT (412 aa). Phosphoserine is present on residues Ser76 and Ser176. Residues Thr180 and Thr183 each carry the phosphothreonine modification. At Ser391 the chain carries Phosphoserine. The helical transmembrane segment at 413 to 433 threads the bilayer; sequence FVHSLVTILAVCIYGVAPVGF. The Lumenal portion of the chain corresponds to 434 to 656; the sequence is SQHETVDSVL…NPEVPDQFYR (223 aa). A glycan (N-linked (GlcNAc...) asparagine) is linked at Asn584. A helical transmembrane segment spans residues 657–677; that stretch reads LWLSLFLHAGVLHCLVSVCFQ. The Cytoplasmic portion of the chain corresponds to 678–692; it reads MTVLRDLEKLAGWHR. The helical transmembrane segment at 693 to 713 threads the bilayer; that stretch reads IAIIYLLSGVTGNLASAIFLP. The Lumenal segment spans residues 714 to 715; the sequence is YR. Residues 716-736 traverse the membrane as a helical segment; that stretch reads AEVGPAGSQFGILACLFVELF. The Cytoplasmic segment spans residues 737–747; that stretch reads QSWQILARPWR. The chain crosses the membrane as a helical span at residues 748–768; sequence AFFKLLAVVLFLFTFGLLPWI. Residues 769-773 lie on the Lumenal side of the membrane; it reads DNFAH. A helical transmembrane segment spans residues 774 to 794; sequence ISGFISGLFLSFAFLPYISFG. Over 795 to 804 the chain is Cytoplasmic; sequence KFDLYRKRCQ. Residues 805-825 form a helical membrane-spanning segment; that stretch reads IIVFQLVFLGLLAGLVVLFYF. The Lumenal portion of the chain corresponds to 826–856; that stretch reads YPVRCEWCEFLTCIPFTDKFCEKYELDAQLH.

The protein belongs to the peptidase S54 family. As to quaternary structure, homodimer, or homooligomer. Interacts with TGFA and HBEGF. Interacts with EGF; may retain EGF in the endoplasmic reticulum and regulates its degradation through the endoplasmic reticulum-associated degradation (ERAD). Interacts (via cytoplasmic N-terminus) with FRMD8/iTAP; this interaction leads to mutual protein stabilization. Interacts with ADAM17/TACE.

The protein localises to the endoplasmic reticulum membrane. Its subcellular location is the golgi apparatus membrane. Its function is as follows. Regulates ADAM17 protease, a sheddase of the epidermal growth factor (EGF) receptor ligands and TNF, thereby plays a role in sleep, cell survival, proliferation, migration and inflammation. Does not exhibit any protease activity on its own. The chain is Inactive rhomboid protein 1 (RHBDF1) from Bos taurus (Bovine).